The chain runs to 331 residues: Pantothenate kinase (331 aa).

Glycine 109–serine 116 is an ATP binding site.

Belongs to the prokaryotic pantothenate kinase family.

The protein localises to the cytoplasm. The catalysed reaction is (R)-pantothenate + ATP = (R)-4'-phosphopantothenate + ADP + H(+). The protein operates within cofactor biosynthesis; coenzyme A biosynthesis; CoA from (R)-pantothenate: step 1/5. In Sinorhizobium medicae (strain WSM419) (Ensifer medicae), this protein is Pantothenate kinase.